A 72-amino-acid chain; its full sequence is Translation initiation factor IF-1 (72 aa).

The S1-like domain maps to 1–72 (MAKDDVIEIE…TKGRITYRFK (72 aa)).

It belongs to the IF-1 family. In terms of assembly, component of the 30S ribosomal translation pre-initiation complex which assembles on the 30S ribosome in the order IF-2 and IF-3, IF-1 and N-formylmethionyl-tRNA(fMet); mRNA recruitment can occur at any time during PIC assembly.

Its subcellular location is the cytoplasm. Functionally, one of the essential components for the initiation of protein synthesis. Stabilizes the binding of IF-2 and IF-3 on the 30S subunit to which N-formylmethionyl-tRNA(fMet) subsequently binds. Helps modulate mRNA selection, yielding the 30S pre-initiation complex (PIC). Upon addition of the 50S ribosomal subunit IF-1, IF-2 and IF-3 are released leaving the mature 70S translation initiation complex. This is Translation initiation factor IF-1 from Ligilactobacillus salivarius (strain UCC118) (Lactobacillus salivarius).